The primary structure comprises 282 residues: MSIKTIQLGDIAIANDKPFVLFGGMNVLESRDLAMSIAEKYLEVTQKLGIPYVFKASFDKANRSSINSYRGPGMEEGLKIFQEIKDTFNVPLITDVHEPHQCAPVAEVVDIIQLPAFLARQTDLVIAMARTGAIINVKKPQFLAPHEMRHIVKKFNEAGNDEIILCERGSCFGYNNLVVDMLGMDEMKQSGYPVIFDATHALQRPGGREDSAGGRRAQATELARSGMALGLAGLFIEAHPDPDNAKCDGPCALPLHQLEAYLSQMKAVDDLVKSFPALDTSK.

The protein belongs to the KdsA family.

The protein resides in the cytoplasm. The enzyme catalyses D-arabinose 5-phosphate + phosphoenolpyruvate + H2O = 3-deoxy-alpha-D-manno-2-octulosonate-8-phosphate + phosphate. It functions in the pathway carbohydrate biosynthesis; 3-deoxy-D-manno-octulosonate biosynthesis; 3-deoxy-D-manno-octulosonate from D-ribulose 5-phosphate: step 2/3. It participates in bacterial outer membrane biogenesis; lipopolysaccharide biosynthesis. The sequence is that of 2-dehydro-3-deoxyphosphooctonate aldolase from Shewanella amazonensis (strain ATCC BAA-1098 / SB2B).